The chain runs to 66 residues: Large ribosomal subunit protein bL33c (66 aa).

Belongs to the bacterial ribosomal protein bL33 family.

Its subcellular location is the plastid. It is found in the chloroplast. This is Large ribosomal subunit protein bL33c from Illicium oligandrum (Star anise).